A 294-amino-acid chain; its full sequence is Large ribosomal subunit protein uL18 (294 aa).

The disordered stretch occupies residues 247 to 275; the sequence is RADPSPSAKKAAKPSKRHTAKRLTYDERK. Residues 256-267 are compositionally biased toward basic residues; it reads KAAKPSKRHTAK.

This sequence belongs to the universal ribosomal protein uL18 family. Component of the large ribosomal subunit (LSU).

The protein localises to the cytoplasm. Its subcellular location is the nucleus. Component of the ribosome, a large ribonucleoprotein complex responsible for the synthesis of proteins in the cell. The small ribosomal subunit (SSU) binds messenger RNAs (mRNAs) and translates the encoded message by selecting cognate aminoacyl-transfer RNA (tRNA) molecules. The large subunit (LSU) contains the ribosomal catalytic site termed the peptidyl transferase center (PTC), which catalyzes the formation of peptide bonds, thereby polymerizing the amino acids delivered by tRNAs into a polypeptide chain. The nascent polypeptides leave the ribosome through a tunnel in the LSU and interact with protein factors that function in enzymatic processing, targeting, and the membrane insertion of nascent chains at the exit of the ribosomal tunnel. The polypeptide is Large ribosomal subunit protein uL18 (rpl-5) (Caenorhabditis briggsae).